A 570-amino-acid polypeptide reads, in one-letter code: Zeta-carotene desaturase, chloroplastic/chromoplastic (570 aa).

A compositionally biased stretch (low complexity) spans 1–16 (MASVAATTTLAPALAP). The segment at 1–33 (MASVAATTTLAPALAPRRARPGTGLVPPRRASA) is disordered.

This sequence belongs to the zeta carotene desaturase family. NAD(+) serves as cofactor. NADP(+) is required as a cofactor. Requires FAD as cofactor.

Its subcellular location is the plastid. The protein localises to the chloroplast. The protein resides in the chromoplast. The enzyme catalyses 9,9'-di-cis-zeta-carotene + 2 a quinone = 7,7',9,9'-tetra-cis-lycopene + 2 a quinol. It participates in carotenoid biosynthesis; lycopene biosynthesis. Catalyzes the conversion of zeta-carotene to lycopene via the intermediary of neurosporene. It carries out two consecutive desaturations (introduction of double bonds) at positions C-7 and C-7'. The protein is Zeta-carotene desaturase, chloroplastic/chromoplastic (ZDS1) of Zea mays (Maize).